The sequence spans 423 residues: Aspartate aminotransferase, mitochondrial (423 aa).

The N-terminal 22 residues, 1-22 (MALLQSRLLLSAPRRAAATARA), are a transit peptide targeting the mitochondrion. Residues G58, W155, and N208 each contribute to the substrate site. K272 carries the N6-(pyridoxal phosphate)lysine modification. R400 provides a ligand contact to substrate.

This sequence belongs to the class-I pyridoxal-phosphate-dependent aminotransferase family. As to quaternary structure, homodimer. Pyridoxal 5'-phosphate serves as cofactor. Detected in heart (at protein level).

Its subcellular location is the mitochondrion matrix. It carries out the reaction L-aspartate + 2-oxoglutarate = oxaloacetate + L-glutamate. The catalysed reaction is L-kynurenine + 2-oxoglutarate = kynurenate + L-glutamate + H2O. Catalyzes the irreversible transamination of the L-tryptophan metabolite L-kynurenine to form kynurenic acid (KA). As a member of the malate-aspartate shuttle, it has a key role in the intracellular NAD(H) redox balance. Is important for metabolite exchange between mitochondria and cytosol, and for amino acid metabolism. This chain is Aspartate aminotransferase, mitochondrial (GOT2), found in Gallus gallus (Chicken).